We begin with the raw amino-acid sequence, 145 residues long: Ventricular natriuretic peptide (145 aa).

An N-terminal signal peptide occupies residues Met-1–Ala-24. A disulfide bond links Cys-117 and Cys-133.

It belongs to the natriuretic peptide family. In terms of tissue distribution, heart atrium and ventricle, and to a very low extent in brain.

It localises to the secreted. In terms of biological role, exhibits natriuretic and vasodepressor activity. The sequence is that of Ventricular natriuretic peptide (vnp) from Acipenser transmontanus (White sturgeon).